The primary structure comprises 204 residues: Peptide deformylase (204 aa).

2 residues coordinate Fe cation: Cys-131 and His-174. Glu-175 is a catalytic residue. Residue His-178 coordinates Fe cation.

The protein belongs to the polypeptide deformylase family. Requires Fe(2+) as cofactor.

It catalyses the reaction N-terminal N-formyl-L-methionyl-[peptide] + H2O = N-terminal L-methionyl-[peptide] + formate. Removes the formyl group from the N-terminal Met of newly synthesized proteins. Requires at least a dipeptide for an efficient rate of reaction. N-terminal L-methionine is a prerequisite for activity but the enzyme has broad specificity at other positions. In Streptococcus equi subsp. zooepidemicus (strain H70), this protein is Peptide deformylase.